Here is a 671-residue protein sequence, read N- to C-terminus: Autophagy-related protein 22-2 (671 aa).

Polar residues-rich tracts occupy residues 1–10 (MVPRNFSESQ) and 19–34 (PSNS…SSSF). Positions 1-67 (MVPRNFSESQ…RDVPAQYAGE (67 aa)) are disordered. N-linked (GlcNAc...) asparagine glycans are attached at residues N5 and N21. The span at 39 to 60 (ERSSSADHDSMGPDIGSAHRDV) shows a compositional bias: basic and acidic residues. The next 4 membrane-spanning stretches (helical) occupy residues 83–103 (YGFA…PITL), 155–175 (SFAM…VVSI), 188–208 (LLLF…TVVP), and 212–232 (LLGA…FVLL). Residues 251–271 (PDFSPEFRPSSVDESPPEHSL) form a disordered region. A helical membrane pass occupies residues 324–344 (IGIGYSAGLFLQCVSIVIIWL). The N-linked (GlcNAc...) asparagine glycan is linked to N346. The next 7 membrane-spanning stretches (helical) occupy residues 354 to 374 (LVLF…ALWL), 422 to 442 (FFLA…GTAV), 457 to 477 (GLIN…WAAI), 491 to 511 (ACIC…LPIV), 523 to 543 (WEMY…SSYC), 560 to 582 (YALY…GAIV), and 591 to 611 (AFWF…FVNV). Residues 634–671 (ESAGEGSRGSSIDHESGQNEGLIYPRVGENAGRGRNDI) are disordered.

Belongs to the ATG22 family.

The protein resides in the vacuole membrane. Vacuolar effluxer which mediate the efflux of amino acids resulting from autophagic degradation. The release of autophagic amino acids allows the maintenance of protein synthesis and viability during nitrogen starvation. This is Autophagy-related protein 22-2 (atg22-2) from Sclerotinia sclerotiorum (strain ATCC 18683 / 1980 / Ss-1) (White mold).